We begin with the raw amino-acid sequence, 624 residues long: Polygalacturonase 1 beta-like protein 2 (624 aa).

Positions 1-26 (MNNIEATLFLCFFCIFSSSNVHFAGA) are cleaved as a signal peptide. The stretch at 121 to 124 (FAAY) is one FXXY 1 repeat. N-linked (GlcNAc...) asparagine glycosylation is present at asparagine 128. FXXY repeat units follow at residues 129–132 (FTNY), 143–146 (FKNY), 157–160 (FRRY), 171–174 (FTNY), 185–188 (FTTY), 199–202 (FTNY), 213–216 (FTSY), 227–230 (FTTY), 241–244 (FTSY), 255–258 (FSGY), and 269–272 (FTKY). N-linked (GlcNAc...) asparagine glycosylation occurs at asparagine 145. The interval 199 to 219 (FTNYNTDANEPNGRFTSYSDK) is disordered. Asparagine 280 carries N-linked (GlcNAc...) asparagine glycosylation. 5 FXXY repeats span residues 283-286 (FTSY), 297-300 (FKGY), 311-314 (FKNY), 325-328 (FSSY), and 339-342 (FVNY). An N-linked (GlcNAc...) asparagine glycan is attached at asparagine 352. One copy of the FXXY 18 repeat lies at 353–356 (FTGY). A glycan (N-linked (GlcNAc...) asparagine) is linked at asparagine 364. FXXY repeat units lie at residues 367 to 370 (FKTY), 376 to 379 (FKVY), and 386 to 389 (FARY). 2 N-linked (GlcNAc...) asparagine glycosylation sites follow: asparagine 392 and asparagine 463. Residues 409 to 623 (FFREAMLKEG…FENDMTWNII (215 aa)) form the BURP domain.

In terms of tissue distribution, expressed in flowers and stems.

It is found in the secreted. Its subcellular location is the extracellular space. The protein resides in the apoplast. It localises to the cell wall. Involved in cell size determination. The sequence is that of Polygalacturonase 1 beta-like protein 2 from Arabidopsis thaliana (Mouse-ear cress).